Here is a 72-residue protein sequence, read N- to C-terminus: Dermaseptin-A4 (72 aa).

The N-terminal stretch at 1–22 (MAFLKKSLFLVLFLGMVSLSIC) is a signal peptide. Residues 23–41 (EEEKREEENEQEDDEQSEE) constitute a propeptide that is removed on maturation. Positions 24 to 43 (EEKREEENEQEDDEQSEEKR) are disordered. The segment covering 30–39 (ENEQEDDEQS) has biased composition (acidic residues). Ala69 carries the post-translational modification Alanine amide. Residues 71-72 (EQ) constitute a propeptide that is removed on maturation.

Belongs to the frog skin active peptide (FSAP) family. Dermaseptin subfamily. As to expression, expressed by the skin glands.

The protein localises to the secreted. Possesses a potent antimicrobial activity against Gram-positive and Gram-negative bacteria. Probably acts by disturbing membrane functions with its amphipathic structure. In Agalychnis annae (Blue-sided leaf frog), this protein is Dermaseptin-A4.